Here is a 669-residue protein sequence, read N- to C-terminus: DNA ligase (669 aa).

NAD(+) contacts are provided by residues 35–39, 84–85, and glutamate 114; these read DSEYD and SL. Lysine 116 acts as the N6-AMP-lysine intermediate in catalysis. The NAD(+) site is built by arginine 137, glutamate 171, lysine 287, and lysine 311. The Zn(2+) site is built by cysteine 405, cysteine 408, cysteine 423, and cysteine 428. A BRCT domain is found at 591-669; sequence DSDSYFAGKT…EAQLLGELKK (79 aa).

The protein belongs to the NAD-dependent DNA ligase family. LigA subfamily. Mg(2+) is required as a cofactor. The cofactor is Mn(2+).

It catalyses the reaction NAD(+) + (deoxyribonucleotide)n-3'-hydroxyl + 5'-phospho-(deoxyribonucleotide)m = (deoxyribonucleotide)n+m + AMP + beta-nicotinamide D-nucleotide.. Functionally, DNA ligase that catalyzes the formation of phosphodiester linkages between 5'-phosphoryl and 3'-hydroxyl groups in double-stranded DNA using NAD as a coenzyme and as the energy source for the reaction. It is essential for DNA replication and repair of damaged DNA. In Bacillus velezensis (strain DSM 23117 / BGSC 10A6 / LMG 26770 / FZB42) (Bacillus amyloliquefaciens subsp. plantarum), this protein is DNA ligase.